A 482-amino-acid polypeptide reads, in one-letter code: C3a anaphylatoxin chemotactic receptor (482 aa).

Topologically, residues 1–23 (MASFSAETNSTDLLSQPWNEPPV) are extracellular. Asn-9 is a glycosylation site (N-linked (GlcNAc...) asparagine). A helical transmembrane segment spans residues 24 to 46 (ILSMVILSLTFLLGLPGNGLVLW). Topologically, residues 47-57 (VAGLKMQRTVN) are cytoplasmic. A helical membrane pass occupies residues 58–80 (TIWFLHLTLADLLCCLSLPFSLA). Over 81–96 (HLALQGQWPYGRFLCK) the chain is Extracellular. A disulfide bridge links Cys-95 with Cys-172. A helical membrane pass occupies residues 97-118 (LIPSIIVLNMFASVFLLTAISL). The Cytoplasmic portion of the chain corresponds to 119–139 (DRCLVVFKPIWCQNHRNVGMA). The chain crosses the membrane as a helical span at residues 140-160 (CSICGCIWVVAFVMCIPVFVY). The Extracellular segment spans residues 161 to 340 (REIFTTDNHN…TPLVAITITR (180 aa)). A sulfotyrosine mark is found at Tyr-174 and Tyr-184. Residue Asn-194 is glycosylated (N-linked (GlcNAc...) asparagine). A glycan (O-linked (GalNAc...) serine) is linked at Ser-266. Position 318 is a sulfotyrosine (Tyr-318). A helical membrane pass occupies residues 341–360 (LVVGFLLPSVIMIACYSFIV). The Cytoplasmic segment spans residues 361 to 377 (FRMQRGRFAKSQSKTFR). A helical transmembrane segment spans residues 378–400 (VAVVVVAVFLVCWTPYHIFGVLS). Residues 401–417 (LLTDPETPLGKTLMSWD) lie on the Extracellular side of the membrane. The chain crosses the membrane as a helical span at residues 418 to 438 (HVCIALASANSCFNPFLYALL). At 439-482 (GKDFRKKARQSIQGILEAAFSEELTRSTHCPSNNVISERNSTTV) the chain is on the cytoplasmic side. Ser-459 bears the Phosphoserine mark. Thr-463 is subject to Phosphothreonine.

It belongs to the G-protein coupled receptor 1 family. In terms of assembly, interacts with VGF-derived peptide TLQP-21. In terms of processing, among the sulfation sites Tyr-174 is essential for binding of C3a anaphylatoxin. O-glycosylated. As to expression, widely expressed in several differentiated hematopoietic cell lines, in the lung, spleen, ovary, placenta, small intestine, throughout the brain, heart, and endothelial cells. Mostly expressed in lymphoid tissues.

It is found in the cell membrane. In terms of biological role, receptor for the chemotactic and inflammatory peptide anaphylatoxin C3a. This receptor stimulates chemotaxis, granule enzyme release and superoxide anion production. The protein is C3a anaphylatoxin chemotactic receptor (C3AR1) of Homo sapiens (Human).